We begin with the raw amino-acid sequence, 534 residues long: 26S proteasome non-ATPase regulatory subunit 3 (534 aa).

The span at 1–16 shows a compositional bias: basic and acidic residues; the sequence is MKQEGSARRRGADKAK. The disordered stretch occupies residues 1–69; sequence MKQEGSARRR…AEHSQRELDT (69 aa). A compositionally biased stretch (pro residues) spans 17-32; it reads PPPGGGEQEPPPPPAP. A Glycyl lysine isopeptide (Lys-Gly) (interchain with G-Cter in SUMO1); alternate cross-link involves residue Lys38. Lys38 is covalently cross-linked (Glycyl lysine isopeptide (Lys-Gly) (interchain with G-Cter in SUMO2); alternate). Residues 286–465 enclose the PCI domain; that stretch reads ARYLYYTGRI…GYVQSKEMID (180 aa). Phosphoserine is present on residues Ser418 and Ser430. The disordered stretch occupies residues 500–534; it reads SYNKDLESAEERREREQQDLEFAKEMAEDDDDSFP. Residues 501-525 are compositionally biased toward basic and acidic residues; sequence YNKDLESAEERREREQQDLEFAKEM.

This sequence belongs to the proteasome subunit S3 family. Component of the 19S proteasome regulatory particle complex. The 26S proteasome consists of a 20S core particle (CP) and two 19S regulatory subunits (RP). The regulatory particle is made of a lid composed of 9 subunits including PSMD3, a base containing 6 ATPases and few additional components. Interacts with UBQLN1 (via ubiquitin-like domain). Interacts with ERCC6.

Its function is as follows. Component of the 26S proteasome, a multiprotein complex involved in the ATP-dependent degradation of ubiquitinated proteins. This complex plays a key role in the maintenance of protein homeostasis by removing misfolded or damaged proteins, which could impair cellular functions, and by removing proteins whose functions are no longer required. Therefore, the proteasome participates in numerous cellular processes, including cell cycle progression, apoptosis, or DNA damage repair. This Homo sapiens (Human) protein is 26S proteasome non-ATPase regulatory subunit 3 (PSMD3).